The chain runs to 368 residues: Chorismate synthase (368 aa).

Arg-46 serves as a coordination point for NADP(+). FMN contacts are provided by residues 124-126, Gly-284, 299-303, and Arg-326; these read RAS and KPTPS.

This sequence belongs to the chorismate synthase family. Requires FMNH2 as cofactor.

The catalysed reaction is 5-O-(1-carboxyvinyl)-3-phosphoshikimate = chorismate + phosphate. It functions in the pathway metabolic intermediate biosynthesis; chorismate biosynthesis; chorismate from D-erythrose 4-phosphate and phosphoenolpyruvate: step 7/7. Catalyzes the anti-1,4-elimination of the C-3 phosphate and the C-6 proR hydrogen from 5-enolpyruvylshikimate-3-phosphate (EPSP) to yield chorismate, which is the branch point compound that serves as the starting substrate for the three terminal pathways of aromatic amino acid biosynthesis. This reaction introduces a second double bond into the aromatic ring system. This is Chorismate synthase from Pyrobaculum aerophilum (strain ATCC 51768 / DSM 7523 / JCM 9630 / CIP 104966 / NBRC 100827 / IM2).